The primary structure comprises 124 residues: Snake venom vascular endothelial growth factor toxin apiscin (124 aa).

Residues 1–24 form the signal peptide; that stretch reads MAAYLLAVAILFCIQGWPSGTVQG. Position 25 is a pyrrolidone carboxylic acid (Q25). 3 cysteine pairs are disulfide-bonded: C38-C80, C69-C115, and C73-C117.

Belongs to the PDGF/VEGF growth factor family. Snake venom VEGF subfamily. As to quaternary structure, homodimer; disulfide-linked. Interacts with VEGF receptor-1 (FLT1) with a high affinity, whereas it binds to VEGF receptor-2 (KDR) with a low affinity. Does not bind VEGF receptor-3 (FLT4). Expressed by the venom gland.

The protein resides in the secreted. In terms of biological role, snake venom VEGFs that may contribute to venom dispersion and prey subjugation by inducing vascular permeability and hypotension. This protein induces an increase in capillary permeability after intradermal injection, as well as a drastic hypotensive effect after intravenous injection. The hypotension is mediated by nitric oxide (NO), which is produced by VEGF-activated endothelium NO synthase. Also induces angiogenesis in vitro. Like other crotalid VEGFs, this protein interacts with VEGF receptor-1 (FLT1) with a high affinity, whereas it binds to VEGF receptor-2 (KDR) with a low affinity. The chain is Snake venom vascular endothelial growth factor toxin apiscin from Agkistrodon piscivorus piscivorus (Eastern cottonmouth).